Reading from the N-terminus, the 139-residue chain is Holo-[acyl-carrier-protein] synthase (139 aa).

The Mg(2+) site is built by Asp8 and Glu57.

This sequence belongs to the P-Pant transferase superfamily. AcpS family. The cofactor is Mg(2+).

It localises to the cytoplasm. It carries out the reaction apo-[ACP] + CoA = holo-[ACP] + adenosine 3',5'-bisphosphate + H(+). Functionally, transfers the 4'-phosphopantetheine moiety from coenzyme A to a Ser of acyl-carrier-protein. The chain is Holo-[acyl-carrier-protein] synthase from Sinorhizobium medicae (strain WSM419) (Ensifer medicae).